A 458-amino-acid polypeptide reads, in one-letter code: MKIIILGAGQVGGTLAENLVGENNDITVVDTNGERLRTLQDKFDLRVVQGHGSHPRVLREAGADDADMLVAVTSSDETNMVACQVAYSLFNTPNRIARIRSPDYVRDADKLFHSDAVPIDHLIAPEQLVIDNIYRLIEYPGALQVVNFAEGKVSLAVVKAYYGGPLIGNALSTMREHMPHIDTRVAAIFRHDRPIRPQGSTIVEAGDEVFFIAASQHIRAVMSELQRLEKPYKRIMLVGGGNIGAGLARRLEKDYSVKLIERNQQRAAELAEKLQNTIVFFGDASDQELLAEEHIDQVDLFIAVTNDDEANIMSAMLAKRMGAKKVMVLIQRRAYVDLVQGSVIDIAISPQQATISALLSHVRKADIVGVSSLRRGVAEAIEAVAHGDESTSRVVGRVIDEIKLPPGTIIGAVVRGNDVMIANDNLRIEQGDHVIMFLTDKKFITDVERLFQPSPFFL.

In terms of domain architecture, RCK N-terminal 1 spans 1-123; that stretch reads MKIIILGAGQ…SDAVPIDHLI (123 aa). NAD(+) contacts are provided by residues 7-11, Asp-30, 73-74, and Arg-98; these read GAGQV and TS. The RCK C-terminal 1 domain occupies 143-227; sequence LQVVNFAEGK…IRAVMSELQR (85 aa). The region spanning 232–348 is the RCK N-terminal 2 domain; sequence YKRIMLVGGG…VQGSVIDIAI (117 aa). 234–262 is a binding site for NAD(+); sequence RIMLVGGGNIGAGLARRLEKDYSVKLIER. The RCK C-terminal 2 domain occupies 368 to 453; that stretch reads VGVSSLRRGV…ITDVERLFQP (86 aa).

Its subcellular location is the cell inner membrane. In terms of biological role, part of the constitutive potassium transport systems TrkG and TrkH. May regulate the transport activity of TrkG and TrkH systems. Binds to NAD(+) and NADH. This chain is Trk system potassium uptake protein TrkA (trkA), found in Escherichia coli O157:H7.